We begin with the raw amino-acid sequence, 124 residues long: MIMTEVPEGLNYTKTHEWYRKDGNTATIGITDYAQSQMTDIVYVDLPKVGDKKKAGDVLLTIESVKSAEDVYSPITGTVTAVNEEVAKHPESINKDPYGSWLVKMAIESEGEHLSASEYRKLIQ.

Residues 25 to 106 (TATIGITDYA…PYGSWLVKMA (82 aa)) form the Lipoyl-binding domain. Lys-66 bears the N6-lipoyllysine mark.

The protein belongs to the GcvH family. As to quaternary structure, the glycine cleavage system is composed of four proteins: P, T, L and H. It depends on (R)-lipoate as a cofactor.

Functionally, the glycine cleavage system catalyzes the degradation of glycine. The H protein shuttles the methylamine group of glycine from the P protein to the T protein. The chain is Probable glycine cleavage system H protein from Thermoplasma acidophilum (strain ATCC 25905 / DSM 1728 / JCM 9062 / NBRC 15155 / AMRC-C165).